We begin with the raw amino-acid sequence, 139 residues long: Metallothiol transferase FosB (139 aa).

Positions 4–119 constitute a VOC domain; that stretch reads GINHITYSVS…DGHKLELHTG (116 aa). The Mg(2+) site is built by His7, His66, and Glu115. The Proton donor/acceptor role is filled by Glu115.

The protein belongs to the fosfomycin resistance protein family. FosB subfamily. As to quaternary structure, homodimer. It depends on Mg(2+) as a cofactor.

The protein resides in the cytoplasm. Functionally, metallothiol transferase which confers resistance to fosfomycin by catalyzing the addition of a thiol cofactor to fosfomycin. L-cysteine is probably the physiological thiol donor. In Staphylococcus epidermidis, this protein is Metallothiol transferase FosB.